We begin with the raw amino-acid sequence, 72 residues long: Large ribosomal subunit protein uL29 (72 aa).

This sequence belongs to the universal ribosomal protein uL29 family.

This Microcystis aeruginosa (strain NIES-843 / IAM M-2473) protein is Large ribosomal subunit protein uL29.